A 2244-amino-acid chain; its full sequence is MAHELSISDIIYPECHLDSPIVSGKLISAIEYAQLRHNQPNGDKRLTENIKINLQGKRRSVYISRQSRLGNYIRDNIKNLKEFLHVSYPECNKSLFSLKSPGMTSKLSNIMKKSFKAYNIVSRKIIEMLQNITRNLITQDQKDEVLGIYEQDRLSNIGKYMSQSQWYECFLFWFTIKTEMRAVIKNSQKPKFRSDSCIIHMKDNNMEIVMNPNLVCIYKNDKDGKRCYYLTPEIVLMCCDVLEGRMMIETSIKSDIKYQSLITRSNALWTFIDSLFPIMGNRIYNIVSMIEPLVLALLQLKDEARILRGAFLHHCIKEIHQELIGCGFTDQKTRSIFIDDLLSVMNIDNIHLLAEFFSFFRTFGHPILEAKTAADKVREHMLADKVLEYGPIMKAHAVFCGTIINGYRDRHRGAWPPLYLPSHASKHIIRLKNSGESLTVDDCVKNWESFCGIQFDCFMELKLDSDLSMYMKDKALSPIKEEWDSVYPREVLNYTPPRSTEPRRLVDVFVNDENFDPYNMLEYVLTGDYLTDEQFNVSYSLKEKETKQAGRLFAKMTYKMRACQVIAEALIASGVGKYFKENGMVKDEHELLKTLFQLSISSVPRGNSQGRDSEFSNNTEKSLISLKRTTGRLLNNEVPCRMNIMSALIDKNQSDQKKHNILPNTRNRHKCDNTSQTFLDYHMEFSPYKSDRMDRTETSDFSKYDDGTGTKFDTVSAFLTTDLKKFCLNWRYESMAIFAERLDEIYGLPGFFNWMHKRLEKSVIYVADPNCPPDIGKHINLDDTPEDDIFIHSPKGGIEGYSQKTWTIATIPFLFLSAYETNTRIAAIVQGDNESIAITQKVHPNLPYKVKKEICARQAQLYFDRLRMNLRALGLNLKATETIISTHLFVYSKKIHYDGAVLSQALKSMSRCCFWSETLVDETRSACSNISTTIAKAIENGLSRNVGYCINVLKVIQQLLISTEFSINETLTADVTSPISNNLDWLVTASRIPAPIGGFNYLNLSRIFVRNIGDPVTASLADLKRMIEHDLMTDKVLQKVMNQEPGDASFLDWASDPYSGNLPDSQSITKTIKNITARTILRTSPNPMLKGLFHDKSFEEDLELATFLMDRRIILPRAAHEILDNSLTGAREEIAGLLDTTKGLIRSGLKKSGIQPKLVSRLSNHDYNQFLILNRLLSNKKRNDLISPKTCSVDLAKALRCHMWRDLALGRSIYGLEVPDALEAMTGRYITGSMECQLCDQGNTMYGWFFVPRDSQLDQVNKEHSSIRVPYVGSSTDERSDIKLGNVKRPTRALRSAIRIATVYTWAYGDSEESWYEAWYLASQRVNIDIDVLKAITPVSTSNNLSHRLRDRSTQFKLPGSVLNRVSRYVNISNDNLDFRVEGEKVDTNLIYQQTMLLGLSVLEGKFRLRTETDDYNGIYHLHVRDNCCVKEVADIGGVNAELPVPEYTEVENNRLIYDPDPVSEIDCDRLSKQESKARELDFPLWSTEELHDVLAKTVAQTVLEIITKADKDVLKQHLAIDSDDSINSLITEFLMVDPELFALYLGQSISVKWAFEIHHRRPHGRHTMVDLLSDLISNTSKHTYKVLSNALSHPRVFKRFVNCGLLLPTQGPYLHQQDFEKLSQNLLITSYMNYLMNWCDFKKFPFLIAEQDEAVVELREDIITSKHLCMIIDLYANHHKPPWIIDLNPQEKICVLRDFISKCRHTDVSSRSWNITDLDFMVFYASLTYLRRGIIKQLRIRQVTEVIDTTTMLRDNILVENPPIKTGVLDIRGCIIYNLEEILSMNTKSTSRKVFNLGSKLSVENHKYRRIGLNSSSCYKALNLSPLIQRYLPAGSQRLFVGEGSGSMMLLYQQTLGCSISFYNSGIDGDYIPGQRELRLFPSEYSIAEDDPSQSDKLKGLVVPLFNGRPETTWIGNLDSYEYIINRTAGRNIGLVHSDMESGIDKQVEEIMIEHSHLISIAINVMIEDGVLVSKIAFAPGFPISRLLNMYRSYFGLVLVCFPVYSNPESTEVYLICLQKTIKTIIPPQKVLDHSYLSDEINDQGITSVIFKIKNIQSKQFHEDLVKHYQVEQPFFVPSHITCDEKLLMQAGLKMNGPEILKNEVGYDIGSDINTLRSTIIILLNEAMNYFDDERSPSHHLEPFPVLEKTRVKTIMGRVTRKVTVYSLIKLKETKSPELYNIKNYIRRKVLILDFRSHTMIKLLPKGMKERREKSGFKEIWIFDLSNREVKIWWKIIGYLSLV.

The 185-residue stretch at 715–899 (VSAFLTTDLK…VYSKKIHYDG (185 aa)) folds into the RdRp catalytic domain. In terms of domain architecture, Mononegavirus-type SAM-dependent 2'-O-MTase spans 1810 to 2017 (RRIGLNSSSC…NPESTEVYLI (208 aa)). 1840-1849 (LFVGEGSGSM) is a binding site for ATP.

The protein belongs to the paramyxovirus L protein family. As to quaternary structure, interacts with the P protein.

The protein resides in the virion. The protein localises to the host cytoplasm. It carries out the reaction RNA(n) + a ribonucleoside 5'-triphosphate = RNA(n+1) + diphosphate. The enzyme catalyses a 5'-end (5'-triphosphoguanosine)-adenylyl-adenylyl-cytidylyl-adenosine in mRNA + 2 S-adenosyl-L-methionine = a 5'-end (N(7)-methyl 5'-triphosphoguanosine)-(2'-O-methyladenylyl)-adenylyl-cytidylyl-adenosine in mRNA + 2 S-adenosyl-L-homocysteine + H(+). It catalyses the reaction a 5'-end (5'-triphosphoguanosine)-adenylyl-adenylyl-cytidylyl-adenosine in mRNA + S-adenosyl-L-methionine = a 5'-end (5'-triphosphoguanosine)-(2'-O-methyladenylyl)-adenylyl-cytidylyl-adenosine in mRNA + S-adenosyl-L-homocysteine + H(+). The catalysed reaction is a 5'-end triphospho-adenylyl-adenylyl-cytidylyl-adenosine in mRNA + GDP + H(+) = a 5'-end (5'-triphosphoguanosine)-adenylyl-adenylyl-cytidylyl-adenosine in mRNA + diphosphate. It carries out the reaction a 5'-end (5'-triphosphoguanosine)-(2'-O-methyladenylyl)-adenylyl-cytidylyl-adenosine in mRNA + S-adenosyl-L-methionine = a 5'-end (N(7)-methyl 5'-triphosphoguanosine)-(2'-O-methyladenylyl)-adenylyl-cytidylyl-adenosine in mRNA + S-adenosyl-L-homocysteine. The enzyme catalyses GTP + H2O = GDP + phosphate + H(+). In terms of biological role, RNA-directed RNA polymerase that catalyzes the transcription of viral mRNAs, their capping and polyadenylation. The template is composed of the viral RNA tightly encapsidated by the nucleoprotein (N). The viral polymerase binds to the genomic RNA at the 3' leader promoter, and transcribes subsequently all viral mRNAs with a decreasing efficiency. The first gene is the most transcribed, and the last the least transcribed. The viral phosphoprotein acts as a processivity factor. Capping is concomitant with initiation of mRNA transcription. Indeed, a GDP polyribonucleotidyl transferase (PRNTase) adds the cap structure when the nascent RNA chain length has reached few nucleotides. Ribose 2'-O methylation of viral mRNA cap precedes and facilitates subsequent guanine-N-7 methylation, both activities being carried by the viral polymerase. Polyadenylation of mRNAs occur by a stuttering mechanism at a slipery stop site present at the end viral genes. After finishing transcription of a mRNA, the polymerase can resume transcription of the downstream gene. RNA-directed RNA polymerase that catalyzes the replication of viral genomic RNA. The template is composed of the viral RNA tightly encapsidated by the nucleoprotein (N). The replicase mode is dependent on intracellular N protein concentration. In this mode, the polymerase replicates the whole viral genome without recognizing transcriptional signals, and the replicated genome is not caped or polyadenylated. The protein is RNA-directed RNA polymerase L (L) of Hendra virus (isolate Horse/Autralia/Hendra/1994).